Here is a 427-residue protein sequence, read N- to C-terminus: MPLQSSRLAVDNGTPVRGKPWPVWPQPTDGTLDALSRVLRSGRWAISGPYRGVESAERRFARRFADYHRIAHCVPASSGTASLMLALEACGVGAGDEVILPGVTWVASASTVVGVNAVPVFADIDPDTLCLDPDAVEAAITPATKAIVVVHLYAAVADLTRLKEVADRHGIVLIEDCAQAHGAEFEGHKVGTFGAVGTFSMQQSKVLTSGEGGAAITADPVLARRMEHLRADGRCYRDQAPPSGHMELVETGELMGSNRCISEFQAAVLTEQLGELDRFNALRRHNAELLDALLTDVGYRPQRSTPGTTARTYYTYVAELPDAELPGADITKVTEALTAELGFPVAPAYSPLNANPLYDPASRSRFALGPQHEKLIDPARFVLPVSGRLTRRLVTFHHAALLGDESDMRDIAEAFTKVLQHRAVLAA.

The interval 1-20 is disordered; the sequence is MPLQSSRLAVDNGTPVRGKP. Lys-205 bears the N6-(pyridoxal phosphate)lysine mark.

This sequence belongs to the DegT/DnrJ/EryC1 family. L-glutamine:2-deoxy-scyllo-inosose/scyllo-inosose aminotransferase subfamily. It depends on pyridoxal 5'-phosphate as a cofactor.

It carries out the reaction 2-deoxy-L-scyllo-inosose + L-glutamine = 2-deoxy-scyllo-inosamine + 2-oxoglutaramate. It catalyses the reaction 3-amino-2,3-dideoxy-scyllo-inosose + L-glutamine = 2-deoxystreptamine + 2-oxoglutaramate. It functions in the pathway metabolic intermediate biosynthesis; 2-deoxystreptamine biosynthesis; 2-deoxystreptamine from D-glucose 6-phosphate: step 2/4. It participates in antibiotic biosynthesis; kanamycin biosynthesis. Functionally, catalyzes the PLP-dependent transamination of 2-deoxy-scyllo-inosose (2-DOI) to form 2-deoxy-scyllo-inosamine (2-DOIA) using L-glutamine as the amino donor. Also catalyzes the transamination of 3-amino-2,3-dideoxy-scyllo-inosose (keto-2-DOIA) into 2-deoxystreptamine (2-DOS). In Streptomyces kanamyceticus, this protein is L-glutamine:2-deoxy-scyllo-inosose aminotransferase (kanB).